Reading from the N-terminus, the 165-residue chain is DNA mimic protein DMP19 (165 aa).

It belongs to the DMP19-like protein family. In terms of assembly, monomer. Homodimer. The monomeric form of DMP19 interacts with the DNA-binding protein HU homodimer with 1:1 stoichiometry. The dimeric form of DMP19 interacts with the Neisseria hypothetical transcription factor (NHTF) dimer.

With respect to regulation, activity can be modulated in vitro by crown ethers, which are small cyclic polyethers that can modify protein surface behavior dramatically by stabilizing either intra- or intermolecular interactions, thereby probably altering the protein's tertiary and quaternary structure. Functionally, acts as a DNA mimic. Interacts with DNA-binding proteins and prevents their binding to DNA by occupying the DNA binding sites on the proteins, acting as a competitive inhibitor. DMP19 is a bifunctional DNA mimic protein involved in controlling nucleoid formation as well as gene regulation. This bifunctionality depends on different oligomeric states. The monomeric form interacts with the DNA-binding protein HU, which prevents HU from binding to DNA and forming nucleoids. The dimeric form interacts with the Neisseria hypothetical transcription factor (NHTF) and prevents NHTF from binding to its DNA-binding sites, thereby blocking its repressor activity and influencing expression of the target genes. DMP19 might use these different oligomerizations to regulate genes in two steps: the monomeric form may first release selected gene regions in chromosomal DNA by preventing HU from binding to DNA and forming nucleoids, then the dimeric form blocks the gene repressor activity of NHTF and ensures the continued expression of NHTF-controlled genes. The chain is DNA mimic protein DMP19 from Neisseria meningitidis serogroup B (strain ATCC BAA-335 / MC58).